Here is a 238-residue protein sequence, read N- to C-terminus: Ribonuclease PH (238 aa).

Phosphate-binding positions include arginine 86 and 124 to 126 (GTR).

The protein belongs to the RNase PH family. As to quaternary structure, homohexameric ring arranged as a trimer of dimers.

The enzyme catalyses tRNA(n+1) + phosphate = tRNA(n) + a ribonucleoside 5'-diphosphate. In terms of biological role, phosphorolytic 3'-5' exoribonuclease that plays an important role in tRNA 3'-end maturation. Removes nucleotide residues following the 3'-CCA terminus of tRNAs; can also add nucleotides to the ends of RNA molecules by using nucleoside diphosphates as substrates, but this may not be physiologically important. Probably plays a role in initiation of 16S rRNA degradation (leading to ribosome degradation) during starvation. This Geotalea daltonii (strain DSM 22248 / JCM 15807 / FRC-32) (Geobacter daltonii) protein is Ribonuclease PH.